We begin with the raw amino-acid sequence, 345 residues long: Arginase (345 aa).

Residues 1–16 (MKETAAAKFERQHMDS) are compositionally biased toward basic and acidic residues. The disordered stretch occupies residues 1-34 (MKETAAAKFERQHMDSPDLGTDDDDKMSPATSPF). Residues Ile-101, His-124, Ser-126, Gly-128, Ile-232, and Cys-234 each contribute to the Mn(2+) site.

It belongs to the arginase family. As to quaternary structure, homotrimer. Requires Mn(2+) as cofactor.

The enzyme catalyses L-arginine + H2O = urea + L-ornithine. The protein operates within nitrogen metabolism; urea cycle; L-ornithine and urea from L-arginine: step 1/1. Its activity is regulated as follows. The enzyme activity is increased in the range of 20-50% upon the addition of Mn(2+) (1 mM), Co(2+) (1 mM), Ni(2+) (1 and 5 mM) and K(+) (5 mM). In contrast, the addition of Cu(2+), Zn(2+), Ca(2+), Mg(2+), Fe(2+) (both 1 and 5 mM), and Co(2+) (5 mM) strongly suppresses the arginase activity. SDS (1%) and EDTA (1 mM) are the most potent inhibitors. Reducing agents DTT (1 mM), PMSF (1 mM) and beta-mercaptoethanol (1 mM) also significantly inhibit activity by 85%, 64% and 35%, respectively. Surfactants Triton X-100 (1%), Tween-80 (1%) and Tween-20 (1%) are more tolerant, showing a slight decrease of arginase activity in the range of 10-30%. Functionally, cold-active L-arginase that catalyzes the hydrolysis of L-arginine to L-ornithine and urea, an essential reaction in the urea cycle for toxic ammonia removal and cell proliferation. Is not able to use D-arginine or L-canavanine as substrates. This Glaciozyma antarctica (strain PI12) (Antarctic psychrophilic yeast) protein is Arginase.